The following is a 405-amino-acid chain: NADH-quinone oxidoreductase subunit D (405 aa).

It belongs to the complex I 49 kDa subunit family. In terms of assembly, NDH-1 is composed of 14 different subunits. Subunits NuoB, C, D, E, F, and G constitute the peripheral sector of the complex.

It localises to the cell inner membrane. The enzyme catalyses a quinone + NADH + 5 H(+)(in) = a quinol + NAD(+) + 4 H(+)(out). Its function is as follows. NDH-1 shuttles electrons from NADH, via FMN and iron-sulfur (Fe-S) centers, to quinones in the respiratory chain. The immediate electron acceptor for the enzyme in this species is believed to be ubiquinone. Couples the redox reaction to proton translocation (for every two electrons transferred, four hydrogen ions are translocated across the cytoplasmic membrane), and thus conserves the redox energy in a proton gradient. The sequence is that of NADH-quinone oxidoreductase subunit D from Leptospira borgpetersenii serovar Hardjo-bovis (strain L550).